Reading from the N-terminus, the 94-residue chain is Large ribosomal subunit protein bL25 (94 aa).

This sequence belongs to the bacterial ribosomal protein bL25 family. As to quaternary structure, part of the 50S ribosomal subunit; part of the 5S rRNA/L5/L18/L25 subcomplex. Contacts the 5S rRNA. Binds to the 5S rRNA independently of L5 and L18.

Functionally, this is one of the proteins that binds to the 5S RNA in the ribosome where it forms part of the central protuberance. This Erwinia tasmaniensis (strain DSM 17950 / CFBP 7177 / CIP 109463 / NCPPB 4357 / Et1/99) protein is Large ribosomal subunit protein bL25.